Here is a 133-residue protein sequence, read N- to C-terminus: Hydrogenase maturation factor HypA (133 aa).

His2 lines the Ni(2+) pocket. Positions 73, 75, 105, and 108 each coordinate Zn(2+).

It belongs to the HypA/HybF family.

Functionally, involved in the maturation of [NiFe] hydrogenases. Required for nickel insertion into the metal center of the hydrogenase. The polypeptide is Hydrogenase maturation factor HypA (Methanosarcina acetivorans (strain ATCC 35395 / DSM 2834 / JCM 12185 / C2A)).